We begin with the raw amino-acid sequence, 507 residues long: Probable allantoinase (507 aa).

Zn(2+) is bound by residues His105, His107, Lys195, His231, His294, and Asp368. At Lys195 the chain carries N6-carboxylysine.

It belongs to the metallo-dependent hydrolases superfamily. Allantoinase family. As to quaternary structure, homotetramer. Zn(2+) serves as cofactor. Post-translationally, carboxylation allows a single lysine to coordinate two zinc ions.

The enzyme catalyses (S)-allantoin + H2O = allantoate + H(+). Its pathway is nitrogen metabolism; (S)-allantoin degradation; allantoate from (S)-allantoin: step 1/1. Functionally, catalyzes the conversion of allantoin (5-ureidohydantoin) to allantoate by hydrolytic cleavage of the five-member hydantoin ring. Catalyzes the first step of the ureide allantoin degradation followed by the sequential activity of AAH, UGLYAH and UAH which allows a complete purine breakdown without the intermediate generation of urea. This Oryza sativa subsp. japonica (Rice) protein is Probable allantoinase (ALN).